Reading from the N-terminus, the 353-residue chain is Protein arginine N-methyltransferase 1 (353 aa).

The region spanning 32 to 353 (KDYYFDSYAH…LSCSTDYRMR (322 aa)) is the SAM-dependent MTase PRMT-type domain. Positions 45, 54, 78, and 100 each coordinate S-adenosyl-L-methionine. Lysine 116 carries the post-translational modification N6-succinyllysine. A Glycyl lysine isopeptide (Lys-Gly) (interchain with G-Cter in ubiquitin) cross-link involves residue lysine 127. Glutamate 129 contacts S-adenosyl-L-methionine. Active-site residues include glutamate 144 and glutamate 153. N6-acetyllysine is present on residues lysine 210 and lysine 215. Phosphoserine is present on residues serine 286 and serine 289.

It belongs to the class I-like SAM-binding methyltransferase superfamily. Protein arginine N-methyltransferase family. In terms of assembly, homodimer and heterodimer with PRMT8. Homooctamer; individual homodimers associates to form a homooctamer. Interacts with NFATC2IP. Interacts with ILF3 and SUPT5H. Individual homodimers can associate to form a homohexamer. Interacts with FOXO1; the interaction methylates FOXO1, retaining it in the nucleus and increasing its transcriptional activity. Methylation of FOXO1 is increased with oxidative stress. Interacts with CHTOP; the interaction methylates CHTOP, enabling its interaction with the 5FMC complex. Interacts with BTG1, BTG2 and IFNAR1. Interacts with and probably methylates ATXN2L. Component of the methylosome, a 20S complex containing at least CLNS1A/pICln, PRMT5/SKB1, WDR77/MEP50, PRMT1 and ERH. Interacts with DHX9 (via RGG region). Interacts (via N-terminus) with HABP4. Interacts with MAP3K5/ASK1; the interaction results in MAP3K5 methylation by PRMT1 which inhibits MAP3K5 activation. Interacts with TRIM48; the interaction results in ubiquitination of PRMT1 by TRIM48, leading to PRMT1 proteasomal degradation and activation of MAP3K5. Interacts with GATOR1 complex; this interaction is S-adenosyl-L-methionine (SAM) dependent and is perturbated by SAMTOR in a SAM-sensitive manner. Interacts with GFI1; promoting recognition and binding of MRE11 and TP53BP1 substrates by PRMT1. In terms of processing, polyubiquitinated at Lys-127 by the SCF(FBXL17) complex, leading to its subsequent degradation. Ubiquitination is regulated by acetylation at Lys-210 and Lys-215. Polyubiquitinated by E3 ubiquitin-protein ligase TRIM48, leading to suppression of MAP3K5/ASK1 methylation and subsequent MAP3K5 activation. Post-translationally, acetylation at Lys-210 and Lys-215 regulates ubiquitination by the SCF(FBXL17) complex. Acetylated at Lys-215 by p300/EP300. Deacetylated at Lys-210 and Lys-215 by SIRT1. As to expression, ubiquitous.

Its subcellular location is the nucleus. It is found in the nucleoplasm. It localises to the cytoplasm. The protein localises to the cytosol. The protein resides in the lysosome membrane. The catalysed reaction is L-arginyl-[protein] + 2 S-adenosyl-L-methionine = N(omega),N(omega)-dimethyl-L-arginyl-[protein] + 2 S-adenosyl-L-homocysteine + 2 H(+). It carries out the reaction L-arginyl-[protein] + S-adenosyl-L-methionine = N(omega)-methyl-L-arginyl-[protein] + S-adenosyl-L-homocysteine + H(+). It catalyses the reaction N(omega)-methyl-L-arginyl-[protein] + S-adenosyl-L-methionine = N(omega),N(omega)-dimethyl-L-arginyl-[protein] + S-adenosyl-L-homocysteine + H(+). Arginine methyltransferase that methylates (mono and asymmetric dimethylation) the guanidino nitrogens of arginyl residues present in proteins such as ESR1, histone H2, H3 and H4, FMR1, ILF3, HNRNPA1, HNRNPD, NFATC2IP, SUPT5H, TAF15, EWS, HABP4, SERBP1, RBM15, FOXO1, CHTOP, MAP3K5/ASK1 and MICU1. Constitutes the main enzyme that mediates monomethylation and asymmetric dimethylation of histone H4 'Arg-3' (H4R3me1 and H4R3me2a, respectively), a specific tag for epigenetic transcriptional activation. May be involved in the regulation of TAF15 transcriptional activity, act as an activator of estrogen receptor (ER)-mediated transactivation, play a key role in neurite outgrowth and act as a negative regulator of megakaryocytic differentiation, by modulating p38 MAPK pathway. Methylates RBM15, promoting ubiquitination and degradation of RBM15. Methylates MRE11 and TP53BP1, promoting the DNA damage response. Methylates FOXO1 and retains it in the nucleus increasing its transcriptional activity. Methylates CHTOP and this methylation is critical for its 5-hydroxymethylcytosine (5hmC)-binding activity. Methylates MAP3K5/ASK1 at 'Arg-85' and 'Arg-87' which promotes association of MAP3K5 with thioredoxin and negatively regulates MAP3K5 association with TRAF2, inhibiting MAP3K5 stimulation and MAP3K5-induced activation of JNK. Methylates H4R3 in genes involved in glioblastomagenesis in a CHTOP- and/or TET1-dependent manner. Plays a role in regulating alternative splicing in the heart. Methylates NPRL2 at 'Arg-78' leading to inhibition of its GTPase activator activity and then the GATOR1 complex and consequently inducing timely mTORC1 activation under methionine-sufficient conditions. The chain is Protein arginine N-methyltransferase 1 from Rattus norvegicus (Rat).